The sequence spans 353 residues: Histidinol-phosphate aminotransferase (353 aa).

Lys209 carries the post-translational modification N6-(pyridoxal phosphate)lysine.

It belongs to the class-II pyridoxal-phosphate-dependent aminotransferase family. Histidinol-phosphate aminotransferase subfamily. As to quaternary structure, homodimer. The cofactor is pyridoxal 5'-phosphate.

It carries out the reaction L-histidinol phosphate + 2-oxoglutarate = 3-(imidazol-4-yl)-2-oxopropyl phosphate + L-glutamate. It functions in the pathway amino-acid biosynthesis; L-histidine biosynthesis; L-histidine from 5-phospho-alpha-D-ribose 1-diphosphate: step 7/9. The protein is Histidinol-phosphate aminotransferase of Buchnera aphidicola subsp. Cinara cedri (strain Cc).